A 662-amino-acid chain; its full sequence is Histone-lysine N-methyltransferase SET9 (662 aa).

The SET domain occupies 115–229; sequence CPWEVSSTNR…AGEEITVTYG (115 aa). Disordered regions lie at residues 260–437, 484–516, and 601–662; these read VPVQ…SLDT, EEGQAADAEQSKRKKQPRRVHKEDTPPARVRTP, and RVRN…FLDP. 3 stretches are compositionally biased toward polar residues: residues 304–326, 355–379, and 398–437; these read KANSRGSLLARDTSSVRSPSIDQ, VSDSSSRGTSVTASESSGAVETDVT, and KKQNNEQSRLAPVSPQSTEGSRSPQQKNGALSSNRSSLDT. The segment covering 647–656 has biased composition (basic residues); that stretch reads RRSGRLRRVN.

The protein belongs to the class V-like SAM-binding methyltransferase superfamily. Histone-lysine methyltransferase family. Suvar4-20 subfamily.

Its subcellular location is the nucleus. It localises to the chromosome. The enzyme catalyses L-lysyl(20)-[histone H4] + 3 S-adenosyl-L-methionine = N(6),N(6),N(6)-trimethyl-L-lysyl(20)-[histone H4] + 3 S-adenosyl-L-homocysteine + 3 H(+). Functionally, histone methyltransferase that trimethylates 'Lys-20' of histone H4 to form H4K20me3. The chain is Histone-lysine N-methyltransferase SET9 (SET9) from Gibberella zeae (strain ATCC MYA-4620 / CBS 123657 / FGSC 9075 / NRRL 31084 / PH-1) (Wheat head blight fungus).